The sequence spans 292 residues: MNKDIATPIRTKEILKKYGFSFKKSLGQNFLIDTNILDRIVDHAEVTDETGVIEIGPGIGALTEQLAKRAKKVTAFEIDQRLLPILNDTLSPYDNVTIIHQDVLKADVGKVIEENFADCKEVMVVANLPYYVTTPIIMKLLEENLPLKGIVVMLQKEVADRMAAIPSSKEYNSLSIAVQYYTEAKTVMVVPKTVFVPQPNVDSAVIKLTVRETPAVSVENDEFFFQLIRASFGQRRKTLMNNLMNNLPDGKQHKAIIEEALQTADIDGKRRGESLSIEEFARLSNVLQKALF.

S-adenosyl-L-methionine is bound by residues N29, L31, G56, E77, D102, and N127.

Belongs to the class I-like SAM-binding methyltransferase superfamily. rRNA adenine N(6)-methyltransferase family. RsmA subfamily.

Its subcellular location is the cytoplasm. It catalyses the reaction adenosine(1518)/adenosine(1519) in 16S rRNA + 4 S-adenosyl-L-methionine = N(6)-dimethyladenosine(1518)/N(6)-dimethyladenosine(1519) in 16S rRNA + 4 S-adenosyl-L-homocysteine + 4 H(+). Its function is as follows. Specifically dimethylates two adjacent adenosines (A1518 and A1519) in the loop of a conserved hairpin near the 3'-end of 16S rRNA in the 30S particle. May play a critical role in biogenesis of 30S subunits. The polypeptide is Ribosomal RNA small subunit methyltransferase A (Bacillus pumilus (strain SAFR-032)).